The sequence spans 434 residues: N-acylneuraminate cytidylyltransferase (434 aa).

At M1 the chain carries N-acetylmethionine. The disordered stretch occupies residues 1–42 (MDSVEKGAATSVSNPRGRPSRGRPPKLQRNSRGGQGRGVEKP). The BC1 motif signature appears at 15-31 (PRGRPSRGRPPKLQRNS). An omega-N-methylarginine mark is found at R37 and R52. R52, N62, R111, S120, S122, and Q143 together coordinate substrate. The short motif at 200–206 (KRPRRQD) is the BC2 motif element. R201 is an active-site residue. The BC3 motif signature appears at 269–276 (KEKLKEIK).

It belongs to the CMP-NeuNAc synthase family. In terms of assembly, homotetramer; the active enzyme is formed by a dimer of dimers. Ubiquitously expressed. Expressed in pancreas, kidney, liver, skeletal muscle, lung, placenta, brain, heart, colon, PBL, small intestine, ovary, testis, prostate, thymus and spleen.

It localises to the nucleus. The enzyme catalyses an N-acylneuraminate + CTP = a CMP-N-acyl-beta-neuraminate + diphosphate. Its pathway is amino-sugar metabolism; N-acetylneuraminate metabolism. In terms of biological role, catalyzes the activation of N-acetylneuraminic acid (NeuNAc) to cytidine 5'-monophosphate N-acetylneuraminic acid (CMP-NeuNAc), a substrate required for the addition of sialic acid. Has some activity toward NeuNAc, N-glycolylneuraminic acid (Neu5Gc) or 2-keto-3-deoxy-D-glycero-D-galacto-nononic acid (KDN). In Homo sapiens (Human), this protein is N-acylneuraminate cytidylyltransferase (CMAS).